Here is a 257-residue protein sequence, read N- to C-terminus: Imidazole glycerol phosphate synthase subunit HisF (257 aa).

Active-site residues include Asp-12 and Asp-131.

The protein belongs to the HisA/HisF family. In terms of assembly, heterodimer of HisH and HisF.

It is found in the cytoplasm. It carries out the reaction 5-[(5-phospho-1-deoxy-D-ribulos-1-ylimino)methylamino]-1-(5-phospho-beta-D-ribosyl)imidazole-4-carboxamide + L-glutamine = D-erythro-1-(imidazol-4-yl)glycerol 3-phosphate + 5-amino-1-(5-phospho-beta-D-ribosyl)imidazole-4-carboxamide + L-glutamate + H(+). It participates in amino-acid biosynthesis; L-histidine biosynthesis; L-histidine from 5-phospho-alpha-D-ribose 1-diphosphate: step 5/9. Its function is as follows. IGPS catalyzes the conversion of PRFAR and glutamine to IGP, AICAR and glutamate. The HisF subunit catalyzes the cyclization activity that produces IGP and AICAR from PRFAR using the ammonia provided by the HisH subunit. The protein is Imidazole glycerol phosphate synthase subunit HisF of Rhodococcus jostii (strain RHA1).